Reading from the N-terminus, the 198-residue chain is Neutrophil gelatinase-associated lipocalin (198 aa).

A signal peptide spans 1 to 20 (MGLGVLCLALVLLGVLQSQA). Position 21 is a pyrrolidone carboxylic acid (Q21). 72 to 74 (YST) lines the a carboxymycobactin pocket. An N-linked (GlcNAc...) asparagine glycan is attached at N85. A disulfide bridge links C96 with C195. Y126 serves as a coordination point for enterobactin. A carboxymycobactin is bound by residues K145, K154, and Y158. K154 lines the enterobactin pocket.

It belongs to the calycin superfamily. Lipocalin family. As to quaternary structure, monomer. Homodimer; disulfide-linked. Heterodimer; disulfide-linked with MMP9. As to expression, detected in the ureteric bud in embryonic kidney (at protein level).

Its subcellular location is the secreted. It localises to the cytoplasmic granule lumen. It is found in the cytoplasmic vesicle lumen. In terms of biological role, iron-trafficking protein involved in multiple processes such as apoptosis, innate immunity and renal development. Binds iron through association with 2,3-dihydroxybenzoic acid (2,3-DHBA), a siderophore that shares structural similarities with bacterial enterobactin, and delivers or removes iron from the cell, depending on the context. Iron-bound form (holo-24p3) is internalized following binding to the SLC22A17 (24p3R) receptor, leading to release of iron and subsequent increase of intracellular iron concentration. In contrast, association of the iron-free form (apo-24p3) with the SLC22A17 (24p3R) receptor is followed by association with an intracellular siderophore, iron chelation and iron transfer to the extracellular medium, thereby reducing intracellular iron concentration. Involved in apoptosis due to interleukin-3 (IL3) deprivation: iron-loaded form increases intracellular iron concentration without promoting apoptosis, while iron-free form decreases intracellular iron levels, inducing expression of the proapoptotic protein BCL2L11/BIM, resulting in apoptosis. Involved in innate immunity; limits bacterial proliferation by sequestering iron bound to microbial siderophores, such as enterobactin. Can also bind siderophores from M.tuberculosis. This chain is Neutrophil gelatinase-associated lipocalin (Lcn2), found in Rattus norvegicus (Rat).